A 478-amino-acid polypeptide reads, in one-letter code: Cytochrome c-552 (478 aa).

The first 26 residues, 1–26 (MARKTLRARRFFSLIFPFFFITSVYA), serve as a signal peptide directing secretion. A heme c-binding site is contributed by histidine 94. Heme-binding residues include cysteine 122, cysteine 125, and lysine 126. Heme c is bound by residues cysteine 160, cysteine 163, histidine 164, cysteine 209, cysteine 212, and histidine 213. Glutamate 215, tyrosine 216, lysine 261, and glutamine 263 together coordinate Ca(2+). Position 216 (tyrosine 216) interacts with substrate. Histidine 264 lines the substrate pocket. Heme c contacts are provided by histidine 275, cysteine 282, cysteine 285, histidine 286, histidine 301, cysteine 314, cysteine 317, histidine 318, and histidine 393.

This sequence belongs to the cytochrome c-552 family. The cofactor is Ca(2+). It depends on heme c as a cofactor.

The protein localises to the periplasm. The enzyme catalyses 6 Fe(III)-[cytochrome c] + NH4(+) + 2 H2O = 6 Fe(II)-[cytochrome c] + nitrite + 8 H(+). The protein operates within nitrogen metabolism; nitrate reduction (assimilation). In terms of biological role, catalyzes the reduction of nitrite to ammonia, consuming six electrons in the process. This Salmonella paratyphi C (strain RKS4594) protein is Cytochrome c-552.